Consider the following 325-residue polypeptide: MATH domain and coiled-coil domain-containing protein At3g58340 (325 aa).

In terms of domain architecture, MATH spans 6–131 (DKKFCWEIKN…NGQVMIVAEV (126 aa)). Residues 266 to 315 (KVDWLEKKLDHVKEKKEKEQSGLIILQGIEQQLHELMHKCEKKKSEVLSV) are a coiled coil.

This Arabidopsis thaliana (Mouse-ear cress) protein is MATH domain and coiled-coil domain-containing protein At3g58340.